The chain runs to 247 residues: Myelin-oligodendrocyte glycoprotein (247 aa).

A signal peptide spans 1–29 (MASLSRPSLPSCLCSFLLLLLLQVSSSYA). Over 30–154 (GQFRVIGPRH…EDPFYWVSPG (125 aa)) the chain is Extracellular. Residues 32 to 145 (FRVIGPRHPI…EEAAMELKVE (114 aa)) form the Ig-like V-type domain. Cys-53 and Cys-127 are oxidised to a cystine. A glycan (N-linked (GlcNAc...) asparagine) is linked at Asn-60. The chain crosses the membrane as a helical span at residues 155 to 175 (VLVLLAVLPVLLLQITVGLIF). Over 176–210 (LCLQYRLRGKLRAEIENLHRTFDPHFLRVPCWKIT) the chain is Cytoplasmic. The helical transmembrane segment at 211–231 (LFVIVPVLGPLVALIICYNWL) threads the bilayer. Topologically, residues 232–247 (HRRLAGQFLEELRNPF) are extracellular.

Belongs to the immunoglobulin superfamily. BTN/MOG family. In terms of assembly, homodimer. May form heterodimers between the different isoforms. As to quaternary structure, (Microbial infection) Interacts with rubella virus E2 glycoprotein. In terms of tissue distribution, found exclusively in the CNS, where it is localized on the surface of myelin and oligodendrocyte cytoplasmic membranes.

Its subcellular location is the cell membrane. Its function is as follows. Mediates homophilic cell-cell adhesion. Minor component of the myelin sheath. May be involved in completion and/or maintenance of the myelin sheath and in cell-cell communication. (Microbial infection) Acts as a receptor for rubella virus. In Homo sapiens (Human), this protein is Myelin-oligodendrocyte glycoprotein (MOG).